The sequence spans 239 residues: MEAVIKVISSACKTYCGKTSPSKKEIGAMLSLLQKEGLLMSPSDLYSPGSWDPITAALSQRAMVLGKSGELKTWGLVLGALKAAREEQVTSEQAKFWLGLGGGRVSPPGPECIEKPATERRIDKGEEVGETTAQRDAKMAPEKMATPKTVGTSCYQCGTATGCNCATASAPPPPYVGSGLYPSLAGVGEQQGQGGDTPWGAEQPRAEPGHAGLAPGPALTDWARIREELASTGPPVVAM.

The segment covering 124–141 has biased composition (basic and acidic residues); sequence KGEEVGETTAQRDAKMAP. The disordered stretch occupies residues 124-144; the sequence is KGEEVGETTAQRDAKMAPEKM. The PPXY motif motif lies at 172–175; that stretch reads PPPY. The disordered stretch occupies residues 184 to 214; it reads LAGVGEQQGQGGDTPWGAEQPRAEPGHAGLA.

It is found in the virion. The protein is Gag polyprotein (ev-1) of Galliformes.